Consider the following 156-residue polypeptide: Arginine repressor (156 aa).

Belongs to the ArgR family.

Its subcellular location is the cytoplasm. Its pathway is amino-acid biosynthesis; L-arginine biosynthesis [regulation]. Its function is as follows. Regulates arginine biosynthesis genes. The polypeptide is Arginine repressor (Shewanella loihica (strain ATCC BAA-1088 / PV-4)).